A 369-amino-acid chain; its full sequence is NAD-dependent epimerase/dehydratase FUM13 (369 aa).

Tyrosine 176 contributes to the NADP(+) binding site.

This sequence belongs to the NAD(P)-dependent epimerase/dehydratase family. Dihydroflavonol-4-reductase subfamily.

Its pathway is mycotoxin biosynthesis. In terms of biological role, NAD-dependent epimerase/dehydratase; part of the gene cluster that mediates the biosynthesis of fumonisins B1 (FB1), B2 (FB2), B3 (FB3), and B4 (FB4), which are carcinogenic mycotoxins. Within the pathway, FUM13 stereospecifically reduces the intermediate 3-keto intermediate 2-amino-3-oxo-12,16-dimethylicosane to the 3-hydroxyl product 2-amino-3-hydroxy-12,16-dimethylicosane. The biosynthesis starts with the FUM1-catalyzed carbon chain assembly from one molecule of acetyl-CoA, eight molecules of malonyl-CoA, and two molecules of methionine (in S-adenosyl form). The C18 polyketide chain is released from the enzyme by a nucleophilic attack of a carbanion, which is derived from R-carbon of alanine by decarboxylation, on the carbonyl carbon of polyketide acyl chain. This step is catalyzed by the pyridoxal 5'-phosphate-dependent aminoacyl transferase FUM8. The resultant 3-keto intermediate is then stereospecifically reduced to a 3-hydroxyl product by reductase FUM13. Subsequent oxidations at C-10 by the cytochrome P450 monooxygenase FUM2, C-14 and C-15 by FUM6, FUM12 or FUM15, tricarballylic esterification of the hydroxyl groups on C-14 and C-15 by acyltransferase FUM14, and C-5 hydroxylation by 2-keto-glutarate-dependent dioxygenase FUM3 furnish the biosynthesis of fumonisins. The tricarballylic moieties are most likely derived from the citric acid cycle, and their addition to the carbon backbone may involve FUM7, FUM10, FUM11 and FUM14. This is NAD-dependent epimerase/dehydratase FUM13 from Gibberella moniliformis (strain M3125 / FGSC 7600) (Maize ear and stalk rot fungus).